Consider the following 116-residue polypeptide: Tachykinin-3 (116 aa).

Positions 1-20 (MRSAMLFAAVLALSLAWTFG) are cleaved as a signal peptide. Residues 21 to 79 (AACEEPQEQGGRLSKDSDLSLLPPPLLRRLYDSRSISLEGLLKVLSKASVGPKETSLPQ) constitute a propeptide that is removed on maturation. M91 bears the Methionine amide mark. Residues 92–116 (GKRNSQPDTPADVVEENTPSFGVLK) form a disordered region. The propeptide occupies 95–116 (NSQPDTPADVVEENTPSFGVLK).

The protein belongs to the tachykinin family.

Its subcellular location is the secreted. In terms of biological role, tachykinins are active peptides which excite neurons, evoke behavioral responses, are potent vasodilators and secretagogues, and contract (directly or indirectly) many smooth muscles. Is a critical central regulator of gonadal function. This chain is Tachykinin-3 (Tac3), found in Rattus norvegicus (Rat).